The sequence spans 131 residues: Large ribosomal subunit protein bL17 (131 aa).

Belongs to the bacterial ribosomal protein bL17 family. As to quaternary structure, part of the 50S ribosomal subunit. Contacts protein L32.

In Shewanella amazonensis (strain ATCC BAA-1098 / SB2B), this protein is Large ribosomal subunit protein bL17.